A 448-amino-acid chain; its full sequence is Chaperone SurA (448 aa).

The N-terminal stretch at 1-27 (MKKTLRFAAVASGLVASLITVAPSASA) is a signal peptide. PpiC domains are found at residues 185 to 288 (QQDL…RLVE) and 301 to 399 (IVQT…QVLG).

The protein localises to the periplasm. It catalyses the reaction [protein]-peptidylproline (omega=180) = [protein]-peptidylproline (omega=0). In terms of biological role, chaperone involved in the correct folding and assembly of outer membrane proteins. Recognizes specific patterns of aromatic residues and the orientation of their side chains, which are found more frequently in integral outer membrane proteins. May act in both early periplasmic and late outer membrane-associated steps of protein maturation. This Burkholderia mallei (strain ATCC 23344) protein is Chaperone SurA.